A 346-amino-acid polypeptide reads, in one-letter code: Phosphoribosylformylglycinamidine cyclo-ligase (346 aa).

It belongs to the AIR synthase family.

The protein resides in the cytoplasm. The catalysed reaction is 2-formamido-N(1)-(5-O-phospho-beta-D-ribosyl)acetamidine + ATP = 5-amino-1-(5-phospho-beta-D-ribosyl)imidazole + ADP + phosphate + H(+). Its pathway is purine metabolism; IMP biosynthesis via de novo pathway; 5-amino-1-(5-phospho-D-ribosyl)imidazole from N(2)-formyl-N(1)-(5-phospho-D-ribosyl)glycinamide: step 2/2. The chain is Phosphoribosylformylglycinamidine cyclo-ligase from Prochlorococcus marinus (strain NATL2A).